The sequence spans 204 residues: Histone chaperone ASF1A (204 aa).

Residues 1–156 form an interaction with histone H3, CHAF1B, and HIRA region; it reads MAKVQVNNVV…TRFHINWEDN (156 aa). Positions 31–37 match the Required for interaction with HIRA motif; it reads IEDLSED. The segment at 155–204 is required for interaction with HIRA; it reads DNTEKLEDAESSNPNLPSLLSTDALPSASKGWSTSENSLNVMLESHMDCM. Ser-192 is modified (phosphoserine; by TLK2).

This sequence belongs to the ASF1 family. Interacts with histone H3 (via C-terminus), including histone H3.1, H3.2 and H3.3, and histone H4; the interaction with H3 is direct. Probably interacts with the heterodimeric form of H3-H4 taking the place of the second dimer. Interacts with the CHAF1A, CHAF1B and RBBP4 subunits of the CAF-1 complex. Interacts with CABIN1, HAT1, HIRA, NASP, TAF1 and UBN1. Found in a soluble complex with NASP and histones H3 and H4; the interaction with NASP is probably indirect and mediated by H3-H4. Interacts with CDAN1. Found in a cytosolic complex with IPO4 and histones H3 and H4. Interacts with CREBBP. In terms of processing, phosphorylated by TLK1 and TLK2. Highly phosphorylated in S-phase and at lower levels in M-phase. TLK2-mediated phosphorylation at Ser-192 prevents proteasome-dependent degradation.

The protein resides in the nucleus. In terms of biological role, histone chaperone that facilitates histone deposition and histone exchange and removal during nucleosome assembly and disassembly. Cooperates with chromatin assembly factor 1 (CAF-1) to promote replication-dependent chromatin assembly and with HIRA to promote replication-independent chromatin assembly. Promotes homologous recombination-mediated repair of double-strand breaks (DSBs) at stalled or collapsed replication forks: acts by mediating histone replacement at DSBs, leading to recruitment of the MMS22L-TONSL complex and subsequent loading of RAD51. Also involved in the nuclear import of the histone H3-H4 dimer together with importin-4 (IPO4): specifically recognizes and binds newly synthesized histones with the monomethylation of H3 'Lys-9' and acetylation at 'Lys-14' (H3K9me1K14ac) marks, and diacetylation at 'Lys-5' and 'Lys-12' of H4 (H4K5K12ac) marks in the cytosol. Required for the formation of senescence-associated heterochromatin foci (SAHF) and efficient senescence-associated cell cycle exit. This Bos taurus (Bovine) protein is Histone chaperone ASF1A (ASF1A).